The chain runs to 468 residues: Tapasin-related protein (468 aa).

The signal sequence occupies residues Met1–Ala18. Topologically, residues Ala19–Arg405 are lumenal. An Ig-like V-type domain is found at Pro181–Gln297. Disulfide bonds link Cys212-Cys283 and Cys321-Cys382. An N-linked (GlcNAc...) asparagine glycan is attached at Asn265. One can recognise an Ig-like C1-type domain in the interval Pro304–Gly394. Residues Thr406–Leu426 form a helical membrane-spanning segment. Residues Gln427–Ser468 lie on the Cytoplasmic side of the membrane.

As to quaternary structure, interacts with peptide-free HLA-A*02-B2M complexes or those loaded with low affinity peptides, likely facilitating peptide exchange onto higher affinity peptides. Interacts with MR1 in a ligand-independent way; this interaction may stabilize MR1 pool and facilitate ligand loading and dissociation.

The protein localises to the cell membrane. It localises to the endoplasmic reticulum membrane. Its subcellular location is the microsome membrane. It is found in the golgi apparatus membrane. In terms of biological role, component of the antigen processing and presentation pathway, which binds to MHC class I coupled with beta2-microglobulin/B2M. Association between TAPBPR and MHC class I occurs in the absence of a functional peptide-loading complex (PLC). Expression seems to slow down and down-regulate MHC class I surface expression. In Pongo abelii (Sumatran orangutan), this protein is Tapasin-related protein (TAPBPL).